The following is a 222-amino-acid chain: Pyridoxal phosphate homeostasis protein (222 aa).

Residue lysine 35 is modified to N6-(pyridoxal phosphate)lysine.

It belongs to the pyridoxal phosphate-binding protein YggS/PROSC family.

Pyridoxal 5'-phosphate (PLP)-binding protein, which is involved in PLP homeostasis. This Helicobacter pylori (strain J99 / ATCC 700824) (Campylobacter pylori J99) protein is Pyridoxal phosphate homeostasis protein.